The following is a 76-amino-acid chain: Toxin Acra III-1 (76 aa).

An LCN-type CS-alpha/beta domain is found at 4–67; the sequence is PGNYPLDTRG…IWDAVKNHCT (64 aa). Cystine bridges form between cysteine 18–cysteine 41, cysteine 27–cysteine 46, and cysteine 31–cysteine 48.

The protein belongs to the long (3 C-C) scorpion toxin superfamily. Sodium channel inhibitor family. Beta subfamily. In terms of tissue distribution, expressed by the venom gland.

The protein resides in the secreted. Functionally, binds to sodium channels (Nav) and affects the channel activation process. This is Toxin Acra III-1 from Androctonus crassicauda (Arabian fat-tailed scorpion).